Here is a 212-residue protein sequence, read N- to C-terminus: Ribonuclease HII (212 aa).

Residues 17 to 211 (ANLAGIDEAG…VIEALLSLEQ (195 aa)) enclose the RNase H type-2 domain. A divalent metal cation is bound by residues D23, E24, and D120.

The protein belongs to the RNase HII family. Mn(2+) serves as cofactor. It depends on Mg(2+) as a cofactor.

It localises to the cytoplasm. The enzyme catalyses Endonucleolytic cleavage to 5'-phosphomonoester.. Functionally, endonuclease that specifically degrades the RNA of RNA-DNA hybrids. The polypeptide is Ribonuclease HII (Chloroflexus aurantiacus (strain ATCC 29364 / DSM 637 / Y-400-fl)).